Consider the following 146-residue polypeptide: Ribonuclease H (146 aa).

Positions 1 to 143 (MKKQVTIYTD…CDQLAREAIK (143 aa)) constitute an RNase H type-1 domain. Mg(2+) contacts are provided by aspartate 10, glutamate 48, aspartate 70, and aspartate 135.

The protein belongs to the RNase H family. In terms of assembly, monomer. It depends on Mg(2+) as a cofactor.

The protein localises to the cytoplasm. The enzyme catalyses Endonucleolytic cleavage to 5'-phosphomonoester.. Endonuclease that specifically degrades the RNA of RNA-DNA hybrids. The polypeptide is Ribonuclease H (Chlorobium chlorochromatii (strain CaD3)).